Here is a 483-residue protein sequence, read N- to C-terminus: Type 2 glycosyltransferase (483 aa).

Residues 21–41 (AVVYLSALFTPWFTAFCVLWL) traverse the membrane as a helical segment. The Dxd motif signature appears at 156 to 158 (DDD). A QxxxRW motif motif is present at residues 301–305 (QCSRW). A glycan (N-linked (GlcNAc...) asparagine) is linked at N313. 3 consecutive transmembrane segments (helical) span residues 336–356 (IATF…ALWW), 369–389 (AIYA…VGLF), and 396–416 (IMFL…KIYA). N421 is a glycosylation site (N-linked (GlcNAc...) asparagine).

The protein belongs to the GT2 glycosyltransferase family.

The protein localises to the cell membrane. Functionally, glycosyltransferase that plays an important role in infection-related morphogenesis and pathogenesis. Involved in stress tolerance and hyphal hydrophobicity via its regulation of the expression of nydrophobin MPG1. May regulate growth, pathogenicity, and cell wall integrity (CWI) through glycosylation of heat shock protein SSB1, and other (unidentified) substrates may contribute to conidiation. Candidate proteins as potential substrates of GT2 include several heat shock proteins (SSB1/MGG_02503, MGG_06759 and MGG_06958), two coiled-coil domain-containing proteins (MGG_04321 and MGG_09571), aminopeptidase 2 (MGG_16472), and a nuclease domain-containing protein (MGG_12646). This is Type 2 glycosyltransferase from Pyricularia oryzae (strain 70-15 / ATCC MYA-4617 / FGSC 8958) (Rice blast fungus).